Here is a 276-residue protein sequence, read N- to C-terminus: Putative serine/threonine-protein kinase R436 (276 aa).

One can recognise a Protein kinase domain in the interval 6 to 266 (YSLDKLIQNR…IKQKLNHFKT (261 aa)). Residues 12-20 (IQNRKSKRI) and Lys-35 each bind ATP. The active-site Proton acceptor is the Asp-132.

Belongs to the protein kinase superfamily. Ser/Thr protein kinase family.

It catalyses the reaction L-seryl-[protein] + ATP = O-phospho-L-seryl-[protein] + ADP + H(+). The catalysed reaction is L-threonyl-[protein] + ATP = O-phospho-L-threonyl-[protein] + ADP + H(+). This Acanthamoeba polyphaga (Amoeba) protein is Putative serine/threonine-protein kinase R436.